Here is a 192-residue protein sequence, read N- to C-terminus: Leucyl/phenylalanyl-tRNA--protein transferase (192 aa).

It belongs to the L/F-transferase family.

The protein resides in the cytoplasm. It catalyses the reaction N-terminal L-lysyl-[protein] + L-leucyl-tRNA(Leu) = N-terminal L-leucyl-L-lysyl-[protein] + tRNA(Leu) + H(+). The catalysed reaction is N-terminal L-arginyl-[protein] + L-leucyl-tRNA(Leu) = N-terminal L-leucyl-L-arginyl-[protein] + tRNA(Leu) + H(+). It carries out the reaction L-phenylalanyl-tRNA(Phe) + an N-terminal L-alpha-aminoacyl-[protein] = an N-terminal L-phenylalanyl-L-alpha-aminoacyl-[protein] + tRNA(Phe). Functionally, functions in the N-end rule pathway of protein degradation where it conjugates Leu, Phe and, less efficiently, Met from aminoacyl-tRNAs to the N-termini of proteins containing an N-terminal arginine or lysine. This chain is Leucyl/phenylalanyl-tRNA--protein transferase, found in Synechococcus sp. (strain JA-3-3Ab) (Cyanobacteria bacterium Yellowstone A-Prime).